A 475-amino-acid polypeptide reads, in one-letter code: Ribulose bisphosphate carboxylase large chain (475 aa).

Positions 1–2 (MS) are excised as a propeptide. Residue Pro3 is modified to N-acetylproline. Lys14 carries the N6,N6,N6-trimethyllysine modification. Residues Asn123 and Thr173 each coordinate substrate. The Proton acceptor role is filled by Lys175. Lys177 is a binding site for substrate. Mg(2+) is bound by residues Lys201, Asp203, and Glu204. Lys201 carries the N6-carboxylysine modification. His294 functions as the Proton acceptor in the catalytic mechanism. Residues Arg295, His327, and Ser379 each contribute to the substrate site.

The protein belongs to the RuBisCO large chain family. Type I subfamily. Heterohexadecamer of 8 large chains and 8 small chains; disulfide-linked. The disulfide link is formed within the large subunit homodimers. The cofactor is Mg(2+). Post-translationally, the disulfide bond which can form in the large chain dimeric partners within the hexadecamer appears to be associated with oxidative stress and protein turnover.

Its subcellular location is the plastid. It localises to the chloroplast. It carries out the reaction 2 (2R)-3-phosphoglycerate + 2 H(+) = D-ribulose 1,5-bisphosphate + CO2 + H2O. It catalyses the reaction D-ribulose 1,5-bisphosphate + O2 = 2-phosphoglycolate + (2R)-3-phosphoglycerate + 2 H(+). RuBisCO catalyzes two reactions: the carboxylation of D-ribulose 1,5-bisphosphate, the primary event in carbon dioxide fixation, as well as the oxidative fragmentation of the pentose substrate in the photorespiration process. Both reactions occur simultaneously and in competition at the same active site. This chain is Ribulose bisphosphate carboxylase large chain, found in Notothixos subaureus (Golden mistletoe).